Consider the following 449-residue polypeptide: Glucose-6-phosphate isomerase (449 aa).

Glutamate 291 (proton donor) is an active-site residue. Active-site residues include histidine 312 and lysine 426.

It belongs to the GPI family.

It localises to the cytoplasm. The catalysed reaction is alpha-D-glucose 6-phosphate = beta-D-fructose 6-phosphate. It functions in the pathway carbohydrate biosynthesis; gluconeogenesis. It participates in carbohydrate degradation; glycolysis; D-glyceraldehyde 3-phosphate and glycerone phosphate from D-glucose: step 2/4. In terms of biological role, catalyzes the reversible isomerization of glucose-6-phosphate to fructose-6-phosphate. The polypeptide is Glucose-6-phosphate isomerase (Streptococcus pyogenes serotype M1).